A 306-amino-acid polypeptide reads, in one-letter code: Oxygen-dependent coproporphyrinogen-III oxidase (306 aa).

Substrate is bound at residue Ser-94. Residues His-98 and His-108 each contribute to the a divalent metal cation site. His-108 functions as the Proton donor in the catalytic mechanism. A substrate-binding site is contributed by 110 to 112 (NVR). A divalent metal cation is bound by residues His-147 and His-177. An important for dimerization region spans residues 242-277 (YVEFNLVYDRGTLFGLQTGGRTESILMSMPPLVRWE). A substrate-binding site is contributed by 260–262 (GGR).

It belongs to the aerobic coproporphyrinogen-III oxidase family. Homodimer. A divalent metal cation serves as cofactor.

It is found in the cytoplasm. It carries out the reaction coproporphyrinogen III + O2 + 2 H(+) = protoporphyrinogen IX + 2 CO2 + 2 H2O. The protein operates within porphyrin-containing compound metabolism; protoporphyrin-IX biosynthesis; protoporphyrinogen-IX from coproporphyrinogen-III (O2 route): step 1/1. In terms of biological role, involved in the heme biosynthesis. Catalyzes the aerobic oxidative decarboxylation of propionate groups of rings A and B of coproporphyrinogen-III to yield the vinyl groups in protoporphyrinogen-IX. This Shewanella woodyi (strain ATCC 51908 / MS32) protein is Oxygen-dependent coproporphyrinogen-III oxidase.